Reading from the N-terminus, the 73-residue chain is Putative membrane protein insertion efficiency factor (73 aa).

This sequence belongs to the UPF0161 family.

Its subcellular location is the cell inner membrane. Functionally, could be involved in insertion of integral membrane proteins into the membrane. In Treponema denticola (strain ATCC 35405 / DSM 14222 / CIP 103919 / JCM 8153 / KCTC 15104), this protein is Putative membrane protein insertion efficiency factor.